We begin with the raw amino-acid sequence, 177 residues long: Transmembrane protein 275 (177 aa).

The interval 1-20 (MPQAKKSTETLAPAPPGRSR) is disordered. The next 2 helical transmembrane spans lie at 36–56 (GLCV…AAFL) and 63–83 (LVVG…CCVC). Residues 113–177 (ESSERTAQDT…LNFPRDPAAS (65 aa)) are disordered. The span at 128–161 (SPAASAASSGRSSPGPGLFALDPPAPATAAPYLP) shows a compositional bias: low complexity.

It is found in the membrane. The protein is Transmembrane protein 275 of Mus musculus (Mouse).